The chain runs to 555 residues: WRKY transcription factor WRKY24 (555 aa).

Disordered regions lie at residues 133-183 (TAPA…AGAN) and 197-248 (SEMA…CTFP). A compositionally biased stretch (low complexity) spans 163–183 (QQQQQPWGYQQQPAGMDAGAN). Positions 214–278 (SQRRSSDDGY…YKGTHNHAKP (65 aa)) form a DNA-binding region, WRKY 1. The short motif at 253–259 (KKKVERS) is the Nuclear localization signal element. The tract at residues 270–365 (KGTHNHAKPQ…DGEGISMAGN (96 aa)) is disordered. Composition is skewed to polar residues over residues 277-294 (KPQN…QVLQ) and 310-320 (TAATPENSSAS). Positions 347-356 (DSKRWRKDGD) are enriched in basic and acidic residues. Positions 379-444 (SDIDILDDGY…YEGKHNHDVP (66 aa)) form a DNA-binding region, WRKY 2. The segment at 466–555 (HPYLPNQPPP…DDMFFQNSLY (90 aa)) is transcription repression of gibberellic acid (GA)-induced promoters. The tract at residues 514–555 (FDDARGSYMSQHQQQQRQNDAMHASRAKEEPGDDMFFQNSLY) is disordered.

It belongs to the WRKY group II-a family. Expressed in aleurone cells. Mostly expressed in aleurone layers and leaves, and, to a lower extent, in roots, panicles and embryos.

The protein resides in the nucleus. In terms of biological role, transcription activator. Interacts specifically with the W box (5'-(T)TGAC[CT]-3'), a frequently occurring elicitor-responsive cis-acting element. Negative regulator of both gibberellic acid (GA) and abscisic acid (ABA) signaling in aleurone cells, probably by interfering with GAM1, via the specific repression of GA- and ABA-induced promoters. This is WRKY transcription factor WRKY24 from Oryza sativa subsp. japonica (Rice).